The chain runs to 725 residues: Aminopeptidase RNPEPL1 (725 aa).

Position 326–330 (326–330 (VAMEN)) interacts with substrate. H353 is a Zn(2+) binding site. Catalysis depends on E354, which acts as the Proton acceptor. Zn(2+)-binding residues include H357 and E376. The interval 676-699 (GLGSSTEPASEPSTELGKAEADTD) is disordered. The span at 679-690 (SSTEPASEPSTE) shows a compositional bias: low complexity.

It belongs to the peptidase M1 family. Requires Zn(2+) as cofactor. Ubiquitously expressed. Expressed at relatively higher levels in heart and skeletal muscle.

It catalyses the reaction Release of N-terminal amino acids, preferentially methionine, from peptides and arylamides.. Its activity is regulated as follows. Inhibited by calcium but not affected by chloride ions. Inhibited by amastatin and to a lower extent by bestatin. Weakly inhibited by puromycin. Broad specificity aminopeptidase which preferentially hydrolyzes an N-terminal methionine, citrulline or glutamine. This chain is Aminopeptidase RNPEPL1, found in Homo sapiens (Human).